Consider the following 631-residue polypeptide: Glutamyl-tRNA(Gln) amidotransferase subunit E (631 aa).

Belongs to the GatB/GatE family. GatE subfamily. Heterodimer of GatD and GatE.

The catalysed reaction is L-glutamyl-tRNA(Gln) + L-glutamine + ATP + H2O = L-glutaminyl-tRNA(Gln) + L-glutamate + ADP + phosphate + H(+). In terms of biological role, allows the formation of correctly charged Gln-tRNA(Gln) through the transamidation of misacylated Glu-tRNA(Gln) in organisms which lack glutaminyl-tRNA synthetase. The reaction takes place in the presence of glutamine and ATP through an activated gamma-phospho-Glu-tRNA(Gln). The GatDE system is specific for glutamate and does not act on aspartate. In Methanococcus maripaludis (strain DSM 14266 / JCM 13030 / NBRC 101832 / S2 / LL), this protein is Glutamyl-tRNA(Gln) amidotransferase subunit E.